The sequence spans 245 residues: Ribosomal RNA small subunit methyltransferase G (245 aa).

Residues G90, L95, 140 to 141 (AE), and R158 contribute to the S-adenosyl-L-methionine site. Residues 223–245 (VVSARRAKPPHPKSARTGKAGTR) are disordered. The segment covering 227-245 (RRAKPPHPKSARTGKAGTR) has biased composition (basic residues).

This sequence belongs to the methyltransferase superfamily. RNA methyltransferase RsmG family.

The protein resides in the cytoplasm. Functionally, specifically methylates the N7 position of guanine in position 518 of 16S rRNA. This chain is Ribosomal RNA small subunit methyltransferase G, found in Mycobacterium avium (strain 104).